The chain runs to 445 residues: Alpha/beta hydrolase psoB (445 aa).

Ser-246 functions as the Nucleophile in the catalytic mechanism.

The protein belongs to the AB hydrolase superfamily. FUS2 hydrolase family. Homodimer.

It functions in the pathway secondary metabolite biosynthesis. Functionally, alpha/beta hydrolase; part of the gene cluster that mediates the biosynthesis of pseurotin A, a competitive inhibitor of chitin synthase and an inducer of nerve-cell proliferation. The PKS-NRPS hybrid synthetase psoA is responsible for the biosynthesis of azaspirene, one of the first intermediates having the 1-oxa-7-azaspiro[4,4]-non-2-ene-4,6-dione core of pseurotin, via condensation of one acetyl-CoA, 4 malonyl-CoA, and a L-phenylalanine molecule. The dual-functional monooxygenase/methyltransferase psoF seems to be involved in the addition of the C3 methyl group onto the pseurotin scaffold. Azaspirene is then converted to synerazol through 4 steps including oxidation of C17 by the cytochrome P450 monooxygenase psoD, O-methylation of the hydroxy group of C8 by the methyltransferase psoC, and the trans-to-cis isomerization of the C13 olefin by the glutathione S-transferase psoE. The fourth step of synerazol production is performed by the dual-functional monooxygenase/methyltransferase psoF which seems to catalyze the epoxidation of the intermediate deepoxy-synerazol. Synerazol can be attacked by a water molecule nonenzymatically at two different positions to yield two diol products, pseurotin A and pseurotin D. This is Alpha/beta hydrolase psoB from Aspergillus fumigatus (strain ATCC MYA-4609 / CBS 101355 / FGSC A1100 / Af293) (Neosartorya fumigata).